Here is a 173-residue protein sequence, read N- to C-terminus: Photosystem I assembly protein Ycf3 (173 aa).

TPR repeat units follow at residues 35-68 (AYLY…EDNQ), 72-105 (GETL…NPKQ), and 120-153 (GRMA…YPGG).

It belongs to the Ycf3 family.

It localises to the cellular thylakoid membrane. Essential for the assembly of the photosystem I (PSI) complex. May act as a chaperone-like factor to guide the assembly of the PSI subunits. The sequence is that of Photosystem I assembly protein Ycf3 from Prochlorococcus marinus (strain NATL2A).